Consider the following 127-residue polypeptide: Glycine cleavage system H protein (127 aa).

In terms of domain architecture, Lipoyl-binding spans 22–103 (EAYIGITDFA…AFANWIIKVE (82 aa)). An N6-lipoyllysine modification is found at Lys-63.

This sequence belongs to the GcvH family. As to quaternary structure, the glycine cleavage system is composed of four proteins: P, T, L and H. The cofactor is (R)-lipoate.

Its function is as follows. The glycine cleavage system catalyzes the degradation of glycine. The H protein shuttles the methylamine group of glycine from the P protein to the T protein. In Alkaliphilus oremlandii (strain OhILAs) (Clostridium oremlandii (strain OhILAs)), this protein is Glycine cleavage system H protein.